A 209-amino-acid polypeptide reads, in one-letter code: Nucleoside triphosphate pyrophosphatase (209 aa).

Aspartate 74 acts as the Proton acceptor in catalysis.

Belongs to the Maf family. A divalent metal cation is required as a cofactor.

It localises to the cytoplasm. It catalyses the reaction a ribonucleoside 5'-triphosphate + H2O = a ribonucleoside 5'-phosphate + diphosphate + H(+). The enzyme catalyses a 2'-deoxyribonucleoside 5'-triphosphate + H2O = a 2'-deoxyribonucleoside 5'-phosphate + diphosphate + H(+). Its function is as follows. Nucleoside triphosphate pyrophosphatase. May have a dual role in cell division arrest and in preventing the incorporation of modified nucleotides into cellular nucleic acids. This chain is Nucleoside triphosphate pyrophosphatase, found in Neorickettsia sennetsu (strain ATCC VR-367 / Miyayama) (Ehrlichia sennetsu).